Here is a 267-residue protein sequence, read N- to C-terminus: Movement protein (267 aa).

This sequence belongs to the tobamovirus movement protein family.

The protein localises to the host cytoplasm. It is found in the host cytoskeleton. The protein resides in the host cell junction. Its subcellular location is the host plasmodesma. Functionally, transports viral genome to neighboring plant cells directly through plasmosdesmata, without any budding. The movement protein allows efficient cell to cell propagation, by bypassing the host cell wall barrier. Forms a ribonucleoprotein complex with viral RNA. Binds microtubules and modulates microtubule stability. Can bind double-stranded DNA. The sequence is that of Movement protein (MP) from Brassicaceae (TVCV).